Reading from the N-terminus, the 221-residue chain is Arginine ABC transporter permease protein ArtQ (221 aa).

The region spanning 13-206 (ALMTLGLAVC…AVTLISQVGI (194 aa)) is the ABC transmembrane type-1 domain. 5 helical membrane-spanning segments follow: residues 17–37 (LGLA…FAVL), 49–69 (VFVA…VYFG), 82–102 (IEFG…AAYA), 121–141 (GAAL…PQVW), and 186–206 (TWYG…QVGI).

The protein belongs to the binding-protein-dependent transport system permease family. HisMQ subfamily. As to quaternary structure, the complex is composed of two ATP-binding proteins (ArtP), two transmembrane proteins (ArtM and ArtQ) and a solute-binding protein (ArtI).

It is found in the cell inner membrane. Part of the ABC transporter complex ArtPIQM involved in arginine transport. Probably responsible for the translocation of the substrate across the membrane. The sequence is that of Arginine ABC transporter permease protein ArtQ (artQ) from Haemophilus influenzae (strain ATCC 51907 / DSM 11121 / KW20 / Rd).